Consider the following 329-residue polypeptide: 4-hydroxythreonine-4-phosphate dehydrogenase (329 aa).

Residues His-136 and Thr-137 each coordinate substrate. His-166, His-211, and His-266 together coordinate a divalent metal cation. 3 residues coordinate substrate: Lys-274, Asn-283, and Arg-292.

Belongs to the PdxA family. In terms of assembly, homodimer. Zn(2+) serves as cofactor. Requires Mg(2+) as cofactor. Co(2+) is required as a cofactor.

Its subcellular location is the cytoplasm. The catalysed reaction is 4-(phosphooxy)-L-threonine + NAD(+) = 3-amino-2-oxopropyl phosphate + CO2 + NADH. The protein operates within cofactor biosynthesis; pyridoxine 5'-phosphate biosynthesis; pyridoxine 5'-phosphate from D-erythrose 4-phosphate: step 4/5. In terms of biological role, catalyzes the NAD(P)-dependent oxidation of 4-(phosphooxy)-L-threonine (HTP) into 2-amino-3-oxo-4-(phosphooxy)butyric acid which spontaneously decarboxylates to form 3-amino-2-oxopropyl phosphate (AHAP). In Escherichia coli (strain 55989 / EAEC), this protein is 4-hydroxythreonine-4-phosphate dehydrogenase.